Here is a 249-residue protein sequence, read N- to C-terminus: Superoxide dismutase 1 copper chaperone (249 aa).

In terms of domain architecture, HMA spans 6–69; that stretch reads TYEATYAIPM…TLRNCGKDAI (64 aa). His16 provides a ligand contact to Zn(2+). The Cu cation site is built by Cys17 and Cys20. Cysteines 27 and 64 form a disulfide. Cu cation-binding residues include Cys229 and Cys231.

It belongs to the CCS1 family. In terms of assembly, homodimer, and heterodimer with apo-SOD1. Zinc-binding at His-16 of CCS1 and 'Glu-43' of apo-SOD1 is required for this heterodimerization. Cu(2+) is required as a cofactor.

It is found in the cytoplasm. Its subcellular location is the mitochondrion intermembrane space. Its function is as follows. Copper chaperone for apo superoxide dismutase 1 (SOD1). Binds copper ions and delivers them specifically to apo-SOD1. The polypeptide is Superoxide dismutase 1 copper chaperone (CCS1) (Saccharomyces cerevisiae (strain ATCC 204508 / S288c) (Baker's yeast)).